Here is a 167-residue protein sequence, read N- to C-terminus: Modulator of smoothened protein (167 aa).

A run of 4 helical transmembrane segments spans residues 7 to 29 (ISGCLFLAADIFAIASIANPDWI), 68 to 88 (TLFFIILGIVSLTITCGLLVI), 101 to 121 (WIAFMGMVLFCMAALIFPVGF), and 139 to 159 (VGSSYVLFVLSIFFTIVGLLF).

Its subcellular location is the cell projection. It localises to the cilium membrane. It is found in the cell membrane. Its function is as follows. Acts as a negative regulator of hedgehog signaling probably by promoting internalization and subsequent degradation of smoothened protein (SMO) present in the ciliary membrane. Plays a role in sonic hedgehog (SHH)-induced spinal neural progenitor cells differentiation. In Danio rerio (Zebrafish), this protein is Modulator of smoothened protein.